The primary structure comprises 216 residues: Somatotropin (216 aa).

A signal peptide spans 1–26 (MAAGPRNSMLLVFALLSLPWPQEVGA). Zn(2+) is bound at residue His-45. Residues Cys-78 and Cys-189 are joined by a disulfide bond. Ser-131 carries the phosphoserine modification. Glu-198 contributes to the Zn(2+) binding site. A disulfide bridge connects residues Cys-206 and Cys-214.

The protein belongs to the somatotropin/prolactin family.

The protein resides in the secreted. In terms of biological role, plays an important role in growth control. Its major role in stimulating body growth is to stimulate the liver and other tissues to secrete IGF1. It stimulates both the differentiation and proliferation of myoblasts. It also stimulates amino acid uptake and protein synthesis in muscle and other tissues. The sequence is that of Somatotropin (GH1) from Neovison vison (American mink).